The sequence spans 247 residues: MAQQGSGYQARYKRILLKLSGEALMGSEEFGIDPKVLDRMALEVGQLVGIGVQVGLVIGGGNLFRGAALSAAGMDRVTGDHMGMLATVMNALAMRDALERANITAIVMSAISMLGVTDHYDRRKAMRHLSAKEVVIFAAGTGNPFFTTDSAACLRAIEIDADVVLKATKVDGVYTADPFKDPNAEKFDHLTYDEVLDRKLGVMDLTAICLCRDHKMPLRVFNMNKPGALLNIVHGGAEGTLIEEAQQ.

Lys-18 to Gly-21 is an ATP binding site. Gly-60 contacts UMP. Gly-61 and Arg-65 together coordinate ATP. Residues Asp-80 and Thr-141–Thr-148 contribute to the UMP site. ATP is bound by residues Thr-168, Tyr-174, and Asp-177.

Belongs to the UMP kinase family. Homohexamer.

It localises to the cytoplasm. The enzyme catalyses UMP + ATP = UDP + ADP. Its pathway is pyrimidine metabolism; CTP biosynthesis via de novo pathway; UDP from UMP (UMPK route): step 1/1. Inhibited by UTP. Its function is as follows. Catalyzes the reversible phosphorylation of UMP to UDP. The polypeptide is Uridylate kinase (Pseudomonas savastanoi pv. phaseolicola (strain 1448A / Race 6) (Pseudomonas syringae pv. phaseolicola (strain 1448A / Race 6))).